The primary structure comprises 440 residues: UDP-N-acetylglucosamine 1-carboxyvinyltransferase (440 aa).

22–23 (KN) lines the phosphoenolpyruvate pocket. UDP-N-acetyl-alpha-D-glucosamine is bound at residue Arg102. Cys126 functions as the Proton donor in the catalytic mechanism. At Cys126 the chain carries 2-(S-cysteinyl)pyruvic acid O-phosphothioketal. Residues 131 to 135 (RPVDQ), Asp320, and Ile342 contribute to the UDP-N-acetyl-alpha-D-glucosamine site.

Belongs to the EPSP synthase family. MurA subfamily.

The protein resides in the cytoplasm. It carries out the reaction phosphoenolpyruvate + UDP-N-acetyl-alpha-D-glucosamine = UDP-N-acetyl-3-O-(1-carboxyvinyl)-alpha-D-glucosamine + phosphate. It functions in the pathway cell wall biogenesis; peptidoglycan biosynthesis. In terms of biological role, cell wall formation. Adds enolpyruvyl to UDP-N-acetylglucosamine. This Acidovorax ebreus (strain TPSY) (Diaphorobacter sp. (strain TPSY)) protein is UDP-N-acetylglucosamine 1-carboxyvinyltransferase.